A 241-amino-acid chain; its full sequence is Endodeoxyribonuclease NucC (241 aa).

Catalysis depends on residues aspartate 73, glutamate 104, and lysine 106. Residues aspartate 73 and glutamate 104 each coordinate Mg(2+).

Belongs to the NucC endonuclease family. Self-oligomerizes. Forms homotrimers; in the presence of cAAA the trimers associate face-to-face to form homohexamers. The 2 cAAA-binding sites are on the exterior of the hexamer at the three-way junction, there are maximally 2 cyclic nucleotides per hexamer. It depends on Mg(2+) as a cofactor.

Its activity is regulated as follows. Activated by cAAA and to a lesser extent cAA; both cyclic nucleotides are products of its cognate CD-NTase. Cyclic nucleotide binding causes hexamerization. In terms of biological role, effector DNase of a CBASS antivirus system. CBASS (cyclic oligonucleotide-based antiphage signaling system) provides immunity against bacteriophage. The CD-NTase protein synthesizes cyclic nucleotides in response to infection; these serve as specific second messenger signals. The signals activate a diverse range of effectors, leading to bacterial cell death and thus abortive phage infection. A type III-C(AAA) CBASS system. Its function is as follows. A cyclic nucleotide-activated dsDNase. In the presence of 3',3',3'-cyclic AMP-AMP-AMP (cAAA) and to a lesser extent cyclic-di-AMP (c-di-AMP), endonucleolytically degrades dsDNA. Binds one cAAA in a pocket on one surface of the trimer; cAAA binding promotes hexamerization which is probably necessary for nuclease activation. The nuclease digests dsDNA to about 50 bp lengths. DNA has been modeled to contact a pair of juxtaposed active sites (one from each layer of the hexamer), accounting for cleavage on both strands. The protein is Endodeoxyribonuclease NucC of Pseudomonas aeruginosa.